Consider the following 179-residue polypeptide: Probable chorismate pyruvate-lyase (179 aa).

Positions 82, 120, and 165 each coordinate substrate.

It belongs to the UbiC family.

The protein resides in the cytoplasm. It catalyses the reaction chorismate = 4-hydroxybenzoate + pyruvate. It functions in the pathway cofactor biosynthesis; ubiquinone biosynthesis. Functionally, removes the pyruvyl group from chorismate, with concomitant aromatization of the ring, to provide 4-hydroxybenzoate (4HB) for the ubiquinone pathway. The sequence is that of Probable chorismate pyruvate-lyase from Vibrio vulnificus (strain YJ016).